Here is a 380-residue protein sequence, read N- to C-terminus: Cytochrome b (380 aa).

Helical transmembrane passes span Phe-34–Met-54, Trp-78–Ile-99, Trp-114–Leu-134, and Phe-179–Leu-199. The heme b site is built by His-84 and His-98. Heme b-binding residues include His-183 and His-197. His-202 contributes to the a ubiquinone binding site. Transmembrane regions (helical) follow at residues Tyr-227–Ser-247, Leu-289–His-309, Met-321–Gly-341, and Phe-348–Pro-368.

This sequence belongs to the cytochrome b family. As to quaternary structure, the cytochrome bc1 complex contains 3 respiratory subunits (MT-CYB, CYC1 and UQCRFS1), 2 core proteins (UQCRC1 and UQCRC2) and probably 6 low-molecular weight proteins. Heme b serves as cofactor.

The protein resides in the mitochondrion inner membrane. Functionally, component of the ubiquinol-cytochrome c reductase complex (complex III or cytochrome b-c1 complex) that is part of the mitochondrial respiratory chain. The b-c1 complex mediates electron transfer from ubiquinol to cytochrome c. Contributes to the generation of a proton gradient across the mitochondrial membrane that is then used for ATP synthesis. In Ranodon sibiricus (Siberian salamander), this protein is Cytochrome b (mt-cyb).